A 78-amino-acid chain; its full sequence is Acyl carrier protein (78 aa).

Positions 2 to 77 (SDTVERVKKI…DAVKFIDKAS (76 aa)) constitute a Carrier domain. Residue Ser37 is modified to O-(pantetheine 4'-phosphoryl)serine.

The protein belongs to the acyl carrier protein (ACP) family. In terms of processing, 4'-phosphopantetheine is transferred from CoA to a specific serine of apo-ACP by AcpS. This modification is essential for activity because fatty acids are bound in thioester linkage to the sulfhydryl of the prosthetic group.

Its subcellular location is the cytoplasm. The protein operates within lipid metabolism; fatty acid biosynthesis. Carrier of the growing fatty acid chain in fatty acid biosynthesis. In Bartonella henselae (strain ATCC 49882 / DSM 28221 / CCUG 30454 / Houston 1) (Rochalimaea henselae), this protein is Acyl carrier protein.